Consider the following 100-residue polypeptide: MAKKSLIYREKKRQQLEKKYHLIRRSSKKEISKIPSLSEKWKIHGKLQSPPRNSAPTRLHRRCFSTGRPRANYRDFGLSGHILREMVHACLLPGATRSSW.

Belongs to the universal ribosomal protein uS14 family. In terms of assembly, part of the 30S ribosomal subunit.

It localises to the plastid. Its subcellular location is the chloroplast. Binds 16S rRNA, required for the assembly of 30S particles. This Nasturtium officinale (Watercress) protein is Small ribosomal subunit protein uS14c.